The primary structure comprises 1253 residues: Structural polyprotein (1253 aa).

The tract at residues 43–77 (VQAQQMQQLISAVSALTTKQNGKAPKKPKKKPQKA) is host transcription inhibition. A disordered region spans residues 58–110 (LTTKQNGKAPKKPKKKPQKAKAKKNEQQKKNENKKPPPKQKNPAKKKKPGKRE). Residues 66–79 (APKKPKKKPQKAKA) show a composition bias toward basic residues. Residues 70-106 (PKKKPQKAKAKKNEQQKKNENKKPPPKQKNPAKKKKP) carry the Nuclear localization signal motif. Over residues 80-92 (KKNEQQKKNENKK) the composition is skewed to basic and acidic residues. Residues 90-121 (NKKPPPKQKNPAKKKKPGKRERMCMKIENDCI) are binding to the viral RNA. The segment covering 93–108 (PPPKQKNPAKKKKPGK) has biased composition (basic residues). A ribosome-binding region spans residues 106-120 (PGKRERMCMKIENDC). A disulfide bond links cysteine 120 and cysteine 135. Residues 120 to 268 (CIFEVKLDGK…RYTPEGTEEW (149 aa)) enclose the Peptidase S3 domain. Histidine 146 functions as the Charge relay system in the catalytic mechanism. Positions 151–161 (IDNPDLAKLTY) match the Nuclear export signal motif. The tract at residues 162-167 (KKSSKY) is interaction with spike glycoprotein E2. The Charge relay system role is filled by aspartate 168. The dimerization of the capsid protein stretch occupies residues 190 to 200 (PEGHYNWHHGA). The Charge relay system role is filled by serine 220. The interval 226–230 (DNKGR) is dimerization of the capsid protein. Residues 269–280 (SAALMMCVLANV) form a functions as an uncleaved signal peptide for the precursor of protein E3/E2 region. 3 disulfide bridges follow: cysteine 275–cysteine 284, cysteine 289–cysteine 293, and cysteine 292–cysteine 324. Asparagine 279 is a glycosylation site (N-linked (GlcNAc...) asparagine; by host). Asparagine 325 is a glycosylation site (N-linked (GlcNAc...) asparagine; by host). The Extracellular segment spans residues 333 to 694 (SVTKHFNVYK…EIILYYYGLY (362 aa)). 6 disulfide bridges follow: cysteine 351–cysteine 457, cysteine 354–cysteine 360, cysteine 423–cysteine 437, cysteine 485–cysteine 597, cysteine 533–cysteine 557, and cysteine 535–cysteine 552. Interaction with host Mxra8 receptor regions lie at residues 358 to 361 (QFCY) and 394 to 396 (HEH). An interaction with host Mxra8 receptor region spans residues 516 to 519 (QSGN). Residue asparagine 532 is glycosylated (N-linked (GlcNAc...) asparagine; by host). The tract at residues 548–554 (TINSCKI) is interaction with host Mxra8 receptor. An N-linked (GlcNAc...) asparagine; by host glycan is attached at asparagine 594. Residues 695–715 (PAATIAAVSAAGLAVVLSLLA) form a helical membrane-spanning segment. The Cytoplasmic portion of the chain corresponds to 716–754 (SCYMFATARRKCLTPYALTPGAVVPVTLGVLCCAPRAHA). The S-stearoyl cysteine; by host moiety is linked to residue cysteine 717. The tract at residues 722-726 (TARRK) is interaction with the capsid protein. Residue cysteine 727 is the site of S-stearoyl cysteine; by host attachment. Residues 727–747 (CLTPYALTPGAVVPVTLGVLC) are transient transmembrane before p62-6K protein processing. Cysteine 727 and cysteine 748 are oxidised to a cystine. Residues cysteine 747 and cysteine 748 are each lipidated (S-palmitoyl cysteine; by host). The Extracellular segment spans residues 755-769 (ASFAESMAYLWDENQ). The N-linked (GlcNAc...) asparagine; by host glycan is linked to asparagine 768. The chain crosses the membrane as a helical span at residues 770 to 790 (TLFWLELATPLAAIIILVCCL). At 791 to 792 (KN) the chain is on the cytoplasmic side. A helical transmembrane segment spans residues 793–813 (LLCCCKPLSFLVLVSLGTPVV). Extracellular-facing segments span residues 814 to 815 (KS) and 826 to 1227 (VGFP…WVQR). Intrachain disulfides connect cysteine 864–cysteine 929, cysteine 877–cysteine 909, cysteine 878–cysteine 911, and cysteine 883–cysteine 893. The segment at 899–916 (VYPFMWGGAYCFCDTENT) is E1 fusion peptide loop. Residues asparagine 956 and asparagine 1085 are each glycosylated (N-linked (GlcNAc...) asparagine; by host). 4 disulfides stabilise this stretch: cysteine 1074–cysteine 1086, cysteine 1116–cysteine 1191, cysteine 1121–cysteine 1195, and cysteine 1143–cysteine 1185. Residues 1228 to 1248 (VAGGLGGLTLAAVAVLILVTC) traverse the membrane as a helical segment. Cysteine 1248 carries the S-palmitoyl cysteine; by host lipid modification. The Cytoplasmic portion of the chain corresponds to 1249–1253 (VTMRR).

As to quaternary structure, homodimer. Homomultimer. Interacts with host karyopherin KPNA4; this interaction allows the nuclear import of the viral capsid protein. Interacts with spike glycoprotein E2. Interacts with host IRAK1; the interaction leads to inhibition of IRAK1-dependent signaling. The precursor of protein E3/E2 and E1 form a heterodimer shortly after synthesis. In terms of assembly, interacts with spike glycoprotein E2. The precursor of protein E3/E2 and E1 form a heterodimer shortly after synthesis. Processing of the precursor of protein E3/E2 into E2 and E3 results in a heterodimer of the spike glycoproteins E2 and E1. Spike at virion surface are constituted of a trimer of E2-E1 heterodimers. After target cell attachment and endocytosis, E1 change conformation to form homotrimers. Interacts with 6K protein. E1/E2 heterodimer interacts with host LDLR. As to quaternary structure, interacts with spike glycoprotein E1. Processing of the precursor of protein E3/E2 into E2 and E3 results in a heterodimer of the spike glycoproteins E2 and E1. Spike at virion surface are constituted of a trimer of E2-E1 heterodimers. Interacts with 6K protein. Interacts with host MXRA8; this interaction mediates virus entry. Oligomer. Interacts with spike glycoprotein E1. Interacts with spike glycoprotein E2. In terms of processing, structural polyprotein: Specific enzymatic cleavages in vivo yield mature proteins. Capsid protein is auto-cleaved during polyprotein translation, unmasking a signal peptide at the N-terminus of the precursor of E3/E2. The remaining polyprotein is then targeted to the host endoplasmic reticulum, where host signal peptidase cleaves it into pE2, 6K and E1 proteins. pE2 is further processed to mature E3 and E2 by host furin in trans-Golgi vesicle. Palmitoylated via thioester bonds. These palmitoylations may induce disruption of the C-terminus transmembrane. This would result in the reorientation of E2 C-terminus from lumenal to cytoplasmic side. Post-translationally, N-glycosylated. In terms of processing, palmitoylated via thioester bonds.

Its subcellular location is the virion. The protein resides in the host cytoplasm. It is found in the host cell membrane. It localises to the host nucleus. The protein localises to the virion membrane. Its subcellular location is the host Golgi apparatus. The protein resides in the host trans-Golgi network. It is found in the host endoplasmic reticulum. The catalysed reaction is Autocatalytic release of the core protein from the N-terminus of the togavirus structural polyprotein by hydrolysis of a -Trp-|-Ser- bond.. Its function is as follows. Forms an icosahedral capsid with a T=4 symmetry composed of 240 copies of the capsid protein surrounded by a lipid membrane through which penetrate 80 spikes composed of trimers of E1-E2 heterodimers. The capsid protein binds to the viral RNA genome at a site adjacent to a ribosome binding site for viral genome translation following genome release. Possesses a protease activity that results in its autocatalytic cleavage from the nascent structural protein. Following its self-cleavage, the capsid protein transiently associates with ribosomes, and within several minutes the protein binds to viral RNA and rapidly assembles into icosahedric core particles. The resulting nucleocapsid eventually associates with the cytoplasmic domain of the spike glycoprotein E2 at the cell membrane, leading to budding and formation of mature virions. In case of infection, new virions attach to target cells and after clathrin-mediated endocytosis their membrane fuses with the host endosomal membrane. This leads to the release of the nucleocapsid into the cytoplasm, followed by an uncoating event necessary for the genomic RNA to become accessible. The uncoating might be triggered by the interaction of capsid proteins with ribosomes. Binding of ribosomes would release the genomic RNA since the same region is genomic RNA-binding and ribosome-binding. Specifically inhibits interleukin-1 receptor-associated kinase 1/IRAK1-dependent signaling during viral entry, representing a means by which the alphaviruses may evade innate immune detection and activation prior to viral gene expression. Provides the signal sequence for the translocation of the precursor of protein E3/E2 to the host endoplasmic reticulum. Furin-cleaved E3 remains associated with spike glycoprotein E1 and mediates pH protection of the latter during the transport via the secretory pathway. After virion release from the host cell, the assembly protein E3 is gradually released in the extracellular space. Functionally, plays a role in viral attachment to target host cell, by binding to the cell receptor MXRA8. The host LDLR may also act as a cell receptor for viral entry. Synthesized as a p62 precursor which is processed by furin at the cell membrane just before virion budding, giving rise to E2-E1 heterodimer. The p62-E1 heterodimer is stable, whereas E2-E1 is unstable and dissociate at low pH. p62 is processed at the last step, presumably to avoid E1 fusion activation before its final export to cell surface. E2 C-terminus contains a transitory transmembrane that would be disrupted by palmitoylation, resulting in reorientation of the C-terminal tail from lumenal to cytoplasmic side. This step is critical since E2 C-terminus is involved in budding by interacting with capsid proteins. This release of E2 C-terminus in cytoplasm occurs lately in protein export, and precludes premature assembly of particles at the endoplasmic reticulum membrane. In terms of biological role, acts as a viroporin that participates in virus glycoprotein processing and transport to the plasma membrane, cell permeabilization and budding of viral particles. Disrupts the calcium homeostasis of the cell, probably at the endoplasmic reticulum level. This leads to cytoplasmic calcium elevation. Because of its lipophilic properties, the 6K protein is postulated to influence the selection of lipids that interact with the transmembrane domains of the glycoproteins, which, in turn, affects the deformability of the bilayer required for the extreme curvature that occurs as budding proceeds. Present in low amount in virions, about 3% compared to viral glycoproteins. Its function is as follows. Class II viral fusion protein. Fusion activity is inactive as long as E1 is bound to E2 in mature virion. After virus attachment to target cell via host MXRA8 and endocytosis, acidification of the endosome induce dissociation of E1/E2 heterodimer and concomitant trimerization of the E1 subunits. This E1 trimer is fusion active, and promotes release of viral nucleocapsid in cytoplasm after endosome and viral membrane fusion. Efficient fusion requires the presence of cholesterol and sphingolipid in the target membrane. This is Structural polyprotein from Aedes vexans (Inland floodwater mosquito).